The chain runs to 205 residues: Inactive ribonuclease-like protein 9 (205 aa).

The first 26 residues, 1-26 (MMRTLITTHPLPLLLLPQQLLQLVQF), serve as a signal peptide directing secretion. Disulfide bonds link Cys-116–Cys-168 and Cys-123–Cys-130. N-linked (GlcNAc...) asparagine glycosylation is found at Asn-131 and Asn-143.

Belongs to the pancreatic ribonuclease family. At the mRNA level, widely expressed. At protein level, restricted to epididymis. Expressed in spermatozoa (sperm head and neck), with higher levels on ejaculated and epididymal sperm than on testicular sperm (at protein level). Expressed in the epithelial cells of the epididymal tubule (at protein level). Not detected in muscle.

The protein localises to the secreted. Does not exhibit any ribonuclease activity. The chain is Inactive ribonuclease-like protein 9 (RNASE9) from Homo sapiens (Human).